The chain runs to 957 residues: Valine--tRNA ligase (957 aa).

Residues 45–55 (PNVTGSLHMGH) carry the 'HIGH' region motif. Residues 571–575 (KMSKS) carry the 'KMSKS' region motif. Residue K574 participates in ATP binding. The stretch at 887-946 (VVDFAAEQARLEKELGKAEADIKRAEAKLANEKFVANAAEEVVEEEREKREAAVARKVKI) forms a coiled coil.

The protein belongs to the class-I aminoacyl-tRNA synthetase family. ValS type 1 subfamily. As to quaternary structure, monomer.

It is found in the cytoplasm. The catalysed reaction is tRNA(Val) + L-valine + ATP = L-valyl-tRNA(Val) + AMP + diphosphate. Catalyzes the attachment of valine to tRNA(Val). As ValRS can inadvertently accommodate and process structurally similar amino acids such as threonine, to avoid such errors, it has a 'posttransfer' editing activity that hydrolyzes mischarged Thr-tRNA(Val) in a tRNA-dependent manner. This chain is Valine--tRNA ligase, found in Rhodopseudomonas palustris (strain ATCC BAA-98 / CGA009).